Reading from the N-terminus, the 529-residue chain is Biotin-dependent 3-methylcrotonyl-coenzyme A carboxylase beta1 subunit (529 aa).

One can recognise a CoA carboxyltransferase N-terminal domain in the interval 16–272; the sequence is HRRLVAELNN…CEPAQWDVRR (257 aa). Residues 275 to 521 form the CoA carboxyltransferase C-terminal domain; the sequence is EPKYPQAELY…SLCAHAPLDQ (247 aa).

This sequence belongs to the AccD/PCCB family. The biotin-dependent acyl-CoA carboxylase complex is composed of AccA1, which contains the biotin carboxylase (BC) and biotin carboxyl carrier protein (BCCP) domains, and AccD1, which contains the carboxyl transferase (CT) domain. The AccA1/AccD1 complex forms a dodecamer.

The catalysed reaction is 3-methylbut-2-enoyl-CoA + N(6)-carboxybiotinyl-L-lysyl-[protein] = 3-methyl-(2E)-glutaconyl-CoA + N(6)-biotinyl-L-lysyl-[protein]. It participates in amino-acid degradation; L-leucine degradation. Its function is as follows. Component of a biotin-dependent acyl-CoA carboxylase complex. This subunit transfers the CO2 from carboxybiotin to the CoA ester substrate. When associated with the alpha1 subunit AccA1, is involved in branched amino-acid catabolism with methylcrotonyl coenzyme A as the substrate. Shows residual with propionyl-CoA and acetyl-CoA. This is Biotin-dependent 3-methylcrotonyl-coenzyme A carboxylase beta1 subunit from Mycobacterium tuberculosis (strain ATCC 25618 / H37Rv).